A 354-amino-acid polypeptide reads, in one-letter code: Sulfate/thiosulfate import ATP-binding protein CysA (354 aa).

One can recognise an ABC transporter domain in the interval 3-237 (IEVRGLSKRF…PATPFVYGFL (235 aa)). Residue 35 to 42 (GPSGCGKT) participates in ATP binding.

Belongs to the ABC transporter superfamily. Sulfate/tungstate importer (TC 3.A.1.6) family. The complex is composed of two ATP-binding proteins (CysA), two transmembrane proteins (CysT and CysW) and a solute-binding protein (CysP).

Its subcellular location is the cell inner membrane. It carries out the reaction sulfate(out) + ATP + H2O = sulfate(in) + ADP + phosphate + H(+). It catalyses the reaction thiosulfate(out) + ATP + H2O = thiosulfate(in) + ADP + phosphate + H(+). In terms of biological role, part of the ABC transporter complex CysAWTP involved in sulfate/thiosulfate import. Responsible for energy coupling to the transport system. The protein is Sulfate/thiosulfate import ATP-binding protein CysA of Bordetella pertussis (strain Tohama I / ATCC BAA-589 / NCTC 13251).